The sequence spans 351 residues: Polycomb group RING finger protein 6 (351 aa).

Positions 1–114 (MEEAETDATE…FSLRLESGRA (114 aa)) are disordered. Basic and acidic residues predominate over residues 9-19 (TENKRASEAKR). Over residues 24-37 (LPPPPPPISPPALI) the composition is skewed to pro residues. Position 32 is a phosphoserine (serine 32). Over residues 38-51 (PAPAAGEEGPASLA) the composition is skewed to low complexity. The segment covering 62–80 (RPPELEPERSLGRLRGRFE) has biased composition (basic and acidic residues). Residues 69–110 (ERSLGRLRGRFEDYDEELEEDEEMEEEEEEEEEMSHFSLRLE) are a coiled coil. Positions 81–101 (DYDEELEEDEEMEEEEEEEEE) are enriched in acidic residues. The residue at position 116 (serine 116) is a Phosphoserine. The RING-type zinc finger occupies 135–174 (CSICKGYLIDATTITECLHTFCKSCIVRHFYYSNRCPKCN). Glycyl lysine isopeptide (Lys-Gly) (interchain with G-Cter in SUMO2) cross-links involve residues lysine 224 and lysine 235.

Component of a PRC1-like complex. Interacts with BMI1/PCGF4, RING1 and RNF2. Interacts with KDM5D. Interacts with CBX4, CBX6, CBX7 and CBX8. In terms of processing, phosphorylated during mitosis.

Its subcellular location is the nucleus. Transcriptional repressor. May modulate the levels of histone H3K4Me3 by activating KDM5D histone demethylase. Component of a Polycomb group (PcG) multiprotein PRC1-like complex, a complex class required to maintain the transcriptionally repressive state of many genes, including Hox genes, throughout development. PcG PRC1 complex acts via chromatin remodeling and modification of histones; it mediates monoubiquitination of histone H2A 'Lys-119', rendering chromatin heritably changed in its expressibility. Within the PRC1-like complex, regulates RNF2 ubiquitin ligase activity. In Rattus norvegicus (Rat), this protein is Polycomb group RING finger protein 6 (Pcgf6).